We begin with the raw amino-acid sequence, 1018 residues long: Importin-9 (1018 aa).

An Importin N-terminal domain is found at 35–114; sequence TEKRIKQLEY…RNILPNGLYD (80 aa). Positions 921-950 are disordered; that stretch reads GKSDEPLTDSEEDGDDEDAPGNPDKPRYIS. Acidic residues predominate over residues 926-939; that stretch reads PLTDSEEDGDDEDA.

It belongs to the importin beta family.

It is found in the cytoplasm. Its subcellular location is the nucleus. Its function is as follows. Nuclear transport receptor that mediates nuclear import of proteins. Serves as receptor for nuclear localization signals (NLS) in cargo substrates. Is thought to mediate docking of the importin/substrate complex to the nuclear pore complex (NPC) through binding to nucleoporin and the complex is subsequently translocated through the pore by an energy requiring, Ran-dependent mechanism. Mediates the import of pre-assembled proteasomes into the nucleus during the late stages of sperm development. The sequence is that of Importin-9 from Drosophila melanogaster (Fruit fly).